We begin with the raw amino-acid sequence, 361 residues long: Glyceraldehyde-3-phosphate dehydrogenase, glycosomal (361 aa).

NAD(+) contacts are provided by residues 13–14 (RI), D39, Q92, and S135. D-glyceraldehyde 3-phosphate is bound by residues 166 to 168 (SCT), T198, 227 to 228 (TG), and R250. C167 (nucleophile) is an active-site residue. NAD(+) is bound at residue N336. Residues 359-361 (SKM) carry the Microbody targeting signal motif.

It belongs to the glyceraldehyde-3-phosphate dehydrogenase family. In terms of assembly, homotetramer.

The protein resides in the glycosome. It catalyses the reaction D-glyceraldehyde 3-phosphate + phosphate + NAD(+) = (2R)-3-phospho-glyceroyl phosphate + NADH + H(+). It functions in the pathway carbohydrate degradation; glycolysis; pyruvate from D-glyceraldehyde 3-phosphate: step 1/5. This is Glyceraldehyde-3-phosphate dehydrogenase, glycosomal (GAPG) from Leishmania mexicana.